A 209-amino-acid chain; its full sequence is FMN-dependent NADH:quinone oxidoreductase (209 aa).

Residues S18, 102–105 (MYNF), and 146–149 (SRGG) each bind FMN.

It belongs to the azoreductase type 1 family. As to quaternary structure, homodimer. It depends on FMN as a cofactor.

The catalysed reaction is 2 a quinone + NADH + H(+) = 2 a 1,4-benzosemiquinone + NAD(+). The enzyme catalyses N,N-dimethyl-1,4-phenylenediamine + anthranilate + 2 NAD(+) = 2-(4-dimethylaminophenyl)diazenylbenzoate + 2 NADH + 2 H(+). Quinone reductase that provides resistance to thiol-specific stress caused by electrophilic quinones. Its function is as follows. Also exhibits azoreductase activity. Catalyzes the reductive cleavage of the azo bond in aromatic azo compounds to the corresponding amines. This chain is FMN-dependent NADH:quinone oxidoreductase, found in Saccharophagus degradans (strain 2-40 / ATCC 43961 / DSM 17024).